A 352-amino-acid chain; its full sequence is tRNA pseudouridine synthase D (352 aa).

Asp-81 functions as the Nucleophile in the catalytic mechanism. Residues 157–303 (GVPNYFGTQR…MDHERRILRL (147 aa)) enclose the TRUD domain.

Belongs to the pseudouridine synthase TruD family.

It carries out the reaction uridine(13) in tRNA = pseudouridine(13) in tRNA. Its function is as follows. Responsible for synthesis of pseudouridine from uracil-13 in transfer RNAs. This Pseudomonas putida (strain ATCC 47054 / DSM 6125 / CFBP 8728 / NCIMB 11950 / KT2440) protein is tRNA pseudouridine synthase D.